We begin with the raw amino-acid sequence, 199 residues long: Ribonuclease P protein subunit p25 (199 aa).

Residues 1–11 (MENFRKVRSEE) show a composition bias toward basic and acidic residues. 2 disordered regions span residues 1 to 31 (MENF…FADL) and 146 to 199 (PRQL…DRTA). Ser172 is modified (phosphoserine). A compositionally biased stretch (acidic residues) spans 190–199 (PEAENEDRTA).

This sequence belongs to the histone-like Alba family. Component of nuclear RNase P and RNase MRP ribonucleoproteins. RNase P consists of a catalytic RNA moiety and 10 different protein chains; POP1, POP4, POP5, POP7, RPP14, RPP21, RPP25, RPP30, RPP38 and RPP40. Within the RNase P complex, POP1, POP7 and RPP25 form the 'finger' subcomplex, POP5, RPP14, RPP40 and homodimeric RPP30 form the 'palm' subcomplex, and RPP21, POP4 and RPP38 form the 'wrist' subcomplex. All subunits of the RNase P complex interact with the catalytic RNA. Several subunits of RNase P are also part of the RNase MRP complex. RNase MRP consists of a catalytic RNA moiety and about 8 protein subunits; POP1, POP7, RPP25, RPP30, RPP38, RPP40 and possibly also POP4 and POP5. POP7 forms a heterodimer with RPP25 that binds to the P3 stem loop of the catalytic RNA.

Its subcellular location is the nucleus. The protein localises to the nucleolus. Its function is as follows. Component of ribonuclease P, a ribonucleoprotein complex that generates mature tRNA molecules by cleaving their 5'-ends. Also a component of the MRP ribonuclease complex, which cleaves pre-rRNA sequences. The chain is Ribonuclease P protein subunit p25 (Rpp25) from Rattus norvegicus (Rat).